A 212-amino-acid chain; its full sequence is FMN-dependent NADH:quinone oxidoreductase 1 (212 aa).

FMN-binding positions include S10, 16–18, 97–100, and 145–148; these read SHS, MYNF, and SRGG.

This sequence belongs to the azoreductase type 1 family. In terms of assembly, homodimer. It depends on FMN as a cofactor.

It carries out the reaction 2 a quinone + NADH + H(+) = 2 a 1,4-benzosemiquinone + NAD(+). The catalysed reaction is N,N-dimethyl-1,4-phenylenediamine + anthranilate + 2 NAD(+) = 2-(4-dimethylaminophenyl)diazenylbenzoate + 2 NADH + 2 H(+). Functionally, quinone reductase that provides resistance to thiol-specific stress caused by electrophilic quinones. Its function is as follows. Also exhibits azoreductase activity. Catalyzes the reductive cleavage of the azo bond in aromatic azo compounds to the corresponding amines. This Pseudomonas fluorescens (strain Pf0-1) protein is FMN-dependent NADH:quinone oxidoreductase 1.